A 347-amino-acid polypeptide reads, in one-letter code: UPF0324 membrane protein Atu0671 (347 aa).

Helical transmembrane passes span 15-37 (LRWLSPLLPGILICAAVSCAAIL), 50-72 (WLGDLVLAILIGTLLRSLVSLPV), 105-127 (AGGLLIGGIALIVALSLVFSYAA), 140-162 (LIACGNSICGNSAIAAAAPAIGA), 172-194 (AFTAVLGVVAVLLMPFLPQLLGL), 201-223 (IFAGLTVYAVPQVLAATAPLGAV), 233-250 (LIRVLMLGPVIATLSVIH), 263-282 (MVPWFIIGFVLMIMARSFGL), 287-309 (LLSPVASLSNILTIMSMAALGLS), and 322-344 (VIIAASLSLVLLGVLSFGLILLT).

Belongs to the UPF0324 family.

It is found in the cell membrane. The chain is UPF0324 membrane protein Atu0671 from Agrobacterium fabrum (strain C58 / ATCC 33970) (Agrobacterium tumefaciens (strain C58)).